The following is a 311-amino-acid chain: tRNA-cytidine(32) 2-sulfurtransferase (311 aa).

The PP-loop motif motif lies at 47 to 52 (SGGKDS). Cys-122, Cys-125, and Cys-213 together coordinate [4Fe-4S] cluster.

The protein belongs to the TtcA family. As to quaternary structure, homodimer. Mg(2+) is required as a cofactor. It depends on [4Fe-4S] cluster as a cofactor.

Its subcellular location is the cytoplasm. It carries out the reaction cytidine(32) in tRNA + S-sulfanyl-L-cysteinyl-[cysteine desulfurase] + AH2 + ATP = 2-thiocytidine(32) in tRNA + L-cysteinyl-[cysteine desulfurase] + A + AMP + diphosphate + H(+). It participates in tRNA modification. Functionally, catalyzes the ATP-dependent 2-thiolation of cytidine in position 32 of tRNA, to form 2-thiocytidine (s(2)C32). The sulfur atoms are provided by the cysteine/cysteine desulfurase (IscS) system. The polypeptide is tRNA-cytidine(32) 2-sulfurtransferase (Klebsiella pneumoniae (strain 342)).